The following is a 177-amino-acid chain: MSTKAWNASRLSGPDPSTPWSLRKPLQHGSRPPKGKRLTVCPPTRPKQTIRISASHASQQLDQAKAACLAVTIKDLEEATAVMRSWEHSLVTPQCIAPRYSIIMFMITAVKRLRESKMLTLSWFNQALMMVSKSGEEMRNLRTAMWILANLIPREVLPLTGDLLPSLQQQEPPMLKQ.

Residues 1-10 are compositionally biased toward polar residues; the sequence is MSTKAWNASR. A disordered region spans residues 1-38; that stretch reads MSTKAWNASRLSGPDPSTPWSLRKPLQHGSRPPKGKRL.

The protein belongs to the morbillivirus protein C family.

The chain is Protein C (P/V/C) from Rinderpest virus (strain RBOK) (RDV).